We begin with the raw amino-acid sequence, 329 residues long: Sideroflexin (329 aa).

5 helical membrane-spanning segments follow: residues 95–115, 147–167, 183–203, 238–258, and 274–294; these read AFLPINVIICAGLILPNASIG, ILEAYASAVGISCSLAVGLGW, LRMMVPFTAVTSAGIANVLIM, FSRAATSFPALLLPPIVMGLF, and LNLAVIAAIFNTSLPAAIALF.

It belongs to the sideroflexin family.

Its subcellular location is the mitochondrion membrane. Mitochondrial amino-acid transporter that mediates transport of serine into mitochondria. The sequence is that of Sideroflexin from Dictyostelium discoideum (Social amoeba).